The sequence spans 285 residues: CBY1-interacting BAR domain-containing protein 1-B (285 aa).

The transit peptide at 1 to 48 directs the protein to the mitochondrion; sequence MSQTPEARTRDNQTRQIQESVNNVEKHFGELCQIFAGYVRKTARLRDK. A BAR-like region spans residues 11–221; the sequence is DNQTRQIQES…DIDEEEDLEV (211 aa). Positions 142 to 184 form a coiled coil; that stretch reads RQIISQAETELQRATMDAARISQQLEETIDNFEKQKIKDIKKL. Residues 241–261 show a composition bias toward polar residues; it reads NSRSGSTSRAPSVISQPPGNR. The tract at residues 241–285 is disordered; sequence NSRSGSTSRAPSVISQPPGNRQKNRMEDDEDGEDDNDENSTEDEN. The span at 267–285 shows a compositional bias: acidic residues; it reads EDDEDGEDDNDENSTEDEN.

It belongs to the CIBAR family.

Its subcellular location is the cytoplasm. It is found in the cytoskeleton. It localises to the microtubule organizing center. The protein localises to the centrosome. The protein resides in the centriole. Its subcellular location is the cell projection. It is found in the cilium. It localises to the nucleus. The protein localises to the mitochondrion inner membrane. The protein resides in the flagellum. Its function is as follows. Plays a critical role in regulating mitochondrial ultrastructure and function by maintaining the integrity of mitochondrial morphology, particularly the organization of cristae. Plays a crucial role in ciliogenesis. Plays a key role in the correct positioning of the annulus, a septin-based ring structure in the sperm flagellum, serving both as a physical barrier and a membrane diffusion barrier that separates the midpiece (MP) from the principal piece (PP). This Xenopus laevis (African clawed frog) protein is CBY1-interacting BAR domain-containing protein 1-B.